We begin with the raw amino-acid sequence, 776 residues long: 1,4-alpha-glucan branching enzyme GlgB (776 aa).

D431 functions as the Nucleophile in the catalytic mechanism. The active-site Proton donor is E484.

Belongs to the glycosyl hydrolase 13 family. GlgB subfamily. In terms of assembly, monomer.

The catalysed reaction is Transfers a segment of a (1-&gt;4)-alpha-D-glucan chain to a primary hydroxy group in a similar glucan chain.. It functions in the pathway glycan biosynthesis; glycogen biosynthesis. Its function is as follows. Catalyzes the formation of the alpha-1,6-glucosidic linkages in glycogen by scission of a 1,4-alpha-linked oligosaccharide from growing alpha-1,4-glucan chains and the subsequent attachment of the oligosaccharide to the alpha-1,6 position. This is 1,4-alpha-glucan branching enzyme GlgB from Trichodesmium erythraeum (strain IMS101).